Consider the following 383-residue polypeptide: Galactokinase (383 aa).

34–37 (EHTD) is a binding site for substrate. 124–130 (GAGLSSS) contacts ATP. Positions 130 and 162 each coordinate Mg(2+). D174 acts as the Proton acceptor in catalysis. A substrate-binding site is contributed by Y223.

The protein belongs to the GHMP kinase family. GalK subfamily.

It localises to the cytoplasm. The enzyme catalyses alpha-D-galactose + ATP = alpha-D-galactose 1-phosphate + ADP + H(+). The protein operates within carbohydrate metabolism; galactose metabolism. Catalyzes the transfer of the gamma-phosphate of ATP to D-galactose to form alpha-D-galactose-1-phosphate (Gal-1-P). This Yersinia enterocolitica serotype O:8 / biotype 1B (strain NCTC 13174 / 8081) protein is Galactokinase.